We begin with the raw amino-acid sequence, 156 residues long: MKLFILAVGHKMPGWIASGFDEYTKRMPPELRIELREIKPELRSGGRSADSVMAAERQKIEAALPKGARIVALDERGRDWTTMQLAQALPGWQQDGRDVAFVIGGADGLDPELKARADVLLRISSMTLPHGMVRVLLAEQLYRAWSITQNHPYHRA.

Residues L73, G104, and I123–L128 each bind S-adenosyl-L-methionine.

It belongs to the RNA methyltransferase RlmH family. As to quaternary structure, homodimer.

It localises to the cytoplasm. The enzyme catalyses pseudouridine(1915) in 23S rRNA + S-adenosyl-L-methionine = N(3)-methylpseudouridine(1915) in 23S rRNA + S-adenosyl-L-homocysteine + H(+). Specifically methylates the pseudouridine at position 1915 (m3Psi1915) in 23S rRNA. The chain is Ribosomal RNA large subunit methyltransferase H from Burkholderia ambifaria (strain ATCC BAA-244 / DSM 16087 / CCUG 44356 / LMG 19182 / AMMD) (Burkholderia cepacia (strain AMMD)).